We begin with the raw amino-acid sequence, 194 residues long: Probable GTP-binding protein EngB (194 aa).

The EngB-type G domain maps to 22–194; it reads DLPEYALAGR…AWQFIKEGME (173 aa). Residues 30–37, 57–61, 75–78, 142–145, and 174–176 each bind GTP; these read GRSNVGKS, GKTQT, DVPG, TKAD, and FSS. The Mg(2+) site is built by Ser-37 and Thr-59.

It belongs to the TRAFAC class TrmE-Era-EngA-EngB-Septin-like GTPase superfamily. EngB GTPase family. Requires Mg(2+) as cofactor.

Functionally, necessary for normal cell division and for the maintenance of normal septation. The protein is Probable GTP-binding protein EngB of Listeria monocytogenes serotype 4b (strain CLIP80459).